A 211-amino-acid chain; its full sequence is Abscisic acid receptor PYL7 (211 aa).

Residues 29–180 (HHCRENQCTS…NLKSLACVSE (152 aa)) form an START-like region. Disulfide bonds link Cys31-Cys161 and Cys36-Cys161. Residues Lys65, 93–98 (ATTSTE), 120–126 (RLKNYSS), and Glu145 contribute to the abscisate site. A Gate loop motif is present at residues 89–93 (SGLPA). Positions 119-121 (HRL) match the Latch loop motif.

It belongs to the PYR/PYL/RCAR abscisic acid intracellular receptor family. In terms of assembly, homodimer. Binds ABA on one subunit only. Binds to CARs protein in an ABA-independent manner, both at the plasma membrane and in the nucleus. Interacts with ABI1, and possibly with other PP2Cs.

Its subcellular location is the cytoplasm. It is found in the nucleus. The protein localises to the cell membrane. Its function is as follows. Receptor for abscisic acid (ABA) required for ABA-mediated responses such as stomatal closure and germination inhibition. Inhibits the activity of group-A protein phosphatases type 2C (PP2Cs) when activated by ABA. In Arabidopsis thaliana (Mouse-ear cress), this protein is Abscisic acid receptor PYL7 (PYL7).